The sequence spans 470 residues: Nuclear receptor ROR-beta (470 aa).

Positions 18–93 (VIPCKICGDK…LGMSRDAVKF (76 aa)) form a DNA-binding region, nuclear receptor. NR C4-type zinc fingers lie at residues 21 to 41 (CKIC…CEGC) and 57 to 81 (CPRQ…LQKC). Positions 104–117 (LYAEVQKHQQRLQE) are enriched in basic and acidic residues. The disordered stretch occupies residues 104-127 (LYAEVQKHQQRLQEQRQQQSGEAE). One can recognise an NR LBD domain in the interval 222–460 (EIDRIAQNII…TLFPPLYKEL (239 aa)). The short motif at 456-461 (LYKELF) is the AF-2 element.

The protein belongs to the nuclear hormone receptor family. NR1 subfamily. In terms of assembly, monomer. Interacts with CRX.

Its subcellular location is the nucleus. It localises to the nucleoplasm. Nuclear receptor that binds DNA as a monomer to ROR response elements (RORE) containing a single core motif half-site 5'-AGGTCA-3' preceded by a short A-T-rich sequence. Considered to have intrinsic transcriptional activity, have some natural ligands such as all-trans retinoic acid (ATRA) and other retinoids which act as inverse agonists repressing the transcriptional activity. Required for normal postnatal development of rod and cone photoreceptor cells. Modulates rod photoreceptors differentiation at least by inducing the transcription factor NRL-mediated pathway. In cone photoreceptor cells, regulates transcription of OPN1SW. Involved in the regulation of the period length and stability of the circadian rhythm. May control cytoarchitectural patterning of neocortical neurons during development. May act in a dose-dependent manner to regulate barrel formation upon innervation of layer IV neurons by thalamocortical axons. May play a role in the suppression of osteoblastic differentiation through the inhibition of RUNX2 transcriptional activity. Its function is as follows. Isoform 1 is critical for hindlimb motor control and for the differentiation of amacrine and horizontal cells in the retina. Regulates the expression of PTF1A synergistically with FOXN4. This Homo sapiens (Human) protein is Nuclear receptor ROR-beta (RORB).